We begin with the raw amino-acid sequence, 253 residues long: 5'-nucleotidase SurE (253 aa).

The a divalent metal cation site is built by Asp8, Asp9, Ser39, and Asn92.

It belongs to the SurE nucleotidase family. The cofactor is a divalent metal cation.

The protein localises to the cytoplasm. It catalyses the reaction a ribonucleoside 5'-phosphate + H2O = a ribonucleoside + phosphate. Nucleotidase that shows phosphatase activity on nucleoside 5'-monophosphates. This is 5'-nucleotidase SurE from Burkholderia vietnamiensis (strain G4 / LMG 22486) (Burkholderia cepacia (strain R1808)).